The primary structure comprises 468 residues: MPEDGGGDSGDVPEIIPDGEPLREEQRPLKQSLGSSLCRESHWKCLLLTLLIHACGAVVAWCRLATVPRLVLGPEAALARGGGGPPPTYPASPCSDGYLYIPLAFVSLLYLLYLAECWHCHVRSCQAPRTDASTVLALIRRLQQAPPCVWWKATSYHYVRRTRQITRYRNGDAYTTTQVYHERADSRTARGEFDYSAHGVRDVSKELVGLADHAATRLRFTKCFSFGSAEAEASYLTQRARFFSANEGLDDYLEAREGMHLKDVDFRESLMVFADPRSPPWYARAWVFWLVSAATLSWPLRVVAAYGTAHVHYQVEKLFGASSPPPGAVPSGPPLSRVATVDFTELEWHICSNRQLVPSYSEAVVMGAGSGAYLRGCQRCRRSVSSNSLPPARPSGPRLPFSRSRLSLGAGGRATPGVFRSLSGGPLGRRGEDTEPLESPPCYEDALYFPVLIVHGDSGCQGDGQGAL.

The tract at residues 1–25 is disordered; the sequence is MPEDGGGDSGDVPEIIPDGEPLREE. The next 2 membrane-spanning stretches (helical) occupy residues 45–65 and 98–118; these read CLLL…CRLA and YLYI…AECW. The segment at 384–438 is disordered; the sequence is VSSNSLPPARPSGPRLPFSRSRLSLGAGGRATPGVFRSLSGGPLGRRGEDTEPLE.

This sequence belongs to the TMEM151 family.

It localises to the membrane. This chain is Transmembrane protein 151B (TMEM151B), found in Bos taurus (Bovine).